The chain runs to 548 residues: Acetylcholine receptor subunit alpha-type des-2 (548 aa).

Residues Met1–Ala19 form the signal peptide. The Extracellular portion of the chain corresponds to Thr21–Leu239. Residues Asn52, Asn96, and Asn224 are each glycosylated (N-linked (GlcNAc...) asparagine). 3 consecutive transmembrane segments (helical) span residues Phe240–Phe260, Val274–Gln294, and Phe301–Val321. A disordered region spans residues Leu422–Asp460. Positions Ser439–Pro455 are enriched in pro residues. Residues Phe517–Ile537 form a helical membrane-spanning segment. Residues His538–Gly548 lie on the Cytoplasmic side of the membrane.

This sequence belongs to the ligand-gated ion channel (TC 1.A.9) family. Acetylcholine receptor (TC 1.A.9.1) subfamily. As to quaternary structure, the functional receptor is a heteromer of deg-3 and des-2. Interacts with ric-3; which is required for proper receptor folding.

Its subcellular location is the cell membrane. In terms of biological role, subunit of the non-synaptic neuronal acetylcholine receptor (AChR), which may play a role in chemotaxis towards choline. After binding choline or acetylcholine, the AChR responds by an extensive change in conformation that affects all subunits and leads to opening of an ion-conducting channel across the plasma membrane. This Caenorhabditis elegans protein is Acetylcholine receptor subunit alpha-type des-2 (des-2).